The chain runs to 487 residues: N-succinylglutamate 5-semialdehyde dehydrogenase (487 aa).

221-226 (GSSDTG) is a binding site for NAD(+). Catalysis depends on residues glutamate 244 and cysteine 278.

This sequence belongs to the aldehyde dehydrogenase family. AstD subfamily.

It carries out the reaction N-succinyl-L-glutamate 5-semialdehyde + NAD(+) + H2O = N-succinyl-L-glutamate + NADH + 2 H(+). The protein operates within amino-acid degradation; L-arginine degradation via AST pathway; L-glutamate and succinate from L-arginine: step 4/5. Catalyzes the NAD-dependent reduction of succinylglutamate semialdehyde into succinylglutamate. This chain is N-succinylglutamate 5-semialdehyde dehydrogenase, found in Burkholderia ambifaria (strain ATCC BAA-244 / DSM 16087 / CCUG 44356 / LMG 19182 / AMMD) (Burkholderia cepacia (strain AMMD)).